Consider the following 268-residue polypeptide: Large ribosomal subunit protein mL46 (268 aa).

The N-terminal 25 residues, 1–25 (MYLKRNIINMQRSFSRQFHISVRNS), are a transit peptide targeting the mitochondrion.

The protein belongs to the mitochondrion-specific ribosomal protein mL46 family. Component of the mitochondrial large ribosomal subunit (mt-LSU). Mature yeast 74S mitochondrial ribosomes consist of a small (37S) and a large (54S) subunit. The 37S small subunit contains a 15S ribosomal RNA (15S mt-rRNA) and at least 32 different proteins. The 54S large subunit contains a 21S rRNA (21S mt-rRNA) and at least 45 different proteins.

It is found in the mitochondrion. Its function is as follows. Component of the mitochondrial ribosome (mitoribosome), a dedicated translation machinery responsible for the synthesis of mitochondrial genome-encoded proteins, including at least some of the essential transmembrane subunits of the mitochondrial respiratory chain. The mitoribosomes are attached to the mitochondrial inner membrane and translation products are cotranslationally integrated into the membrane. In Schizosaccharomyces pombe (strain 972 / ATCC 24843) (Fission yeast), this protein is Large ribosomal subunit protein mL46 (mrpl17).